The following is a 186-amino-acid chain: Bifunctional protein PyrR (186 aa).

Residues 101–113 (VVLVDDVLYTGRT) carry the PRPP-binding motif.

This sequence belongs to the purine/pyrimidine phosphoribosyltransferase family. PyrR subfamily.

The enzyme catalyses UMP + diphosphate = 5-phospho-alpha-D-ribose 1-diphosphate + uracil. Its function is as follows. Regulates the transcription of the pyrimidine nucleotide (pyr) operon in response to exogenous pyrimidines. Also displays a weak uracil phosphoribosyltransferase activity which is not physiologically significant. This is Bifunctional protein PyrR from Syntrophobacter fumaroxidans (strain DSM 10017 / MPOB).